A 412-amino-acid polypeptide reads, in one-letter code: UV DNA damage endonuclease (412 aa).

The protein belongs to the uve1/UvsE family.

Its function is as follows. Component in a DNA repair pathway. Removal of UV LIGHT damaged nucleotides. Recognizes pyrimidine dimers and cleave a phosphodiester bond immediately 5' to the lesion. This is UV DNA damage endonuclease from Clostridium perfringens (strain 13 / Type A).